Consider the following 291-residue polypeptide: ATP synthase gamma chain (291 aa).

The protein belongs to the ATPase gamma chain family. F-type ATPases have 2 components, CF(1) - the catalytic core - and CF(0) - the membrane proton channel. CF(1) has five subunits: alpha(3), beta(3), gamma(1), delta(1), epsilon(1). CF(0) has three main subunits: a, b and c.

Its subcellular location is the cell inner membrane. Its function is as follows. Produces ATP from ADP in the presence of a proton gradient across the membrane. The gamma chain is believed to be important in regulating ATPase activity and the flow of protons through the CF(0) complex. In Xanthobacter autotrophicus (strain ATCC BAA-1158 / Py2), this protein is ATP synthase gamma chain.